We begin with the raw amino-acid sequence, 138 residues long: Acidic phospholipase A2 PL1 (138 aa).

A signal peptide spans 1–16 (MRALWIVAVCLIGAEG). Intrachain disulfides connect cysteine 42–cysteine 131, cysteine 44–cysteine 60, cysteine 59–cysteine 111, cysteine 65–cysteine 138, cysteine 66–cysteine 104, cysteine 73–cysteine 97, and cysteine 91–cysteine 102. Positions 43, 45, and 47 each coordinate Ca(2+). Histidine 63 is an active-site residue. Residue aspartate 64 participates in Ca(2+) binding. The active site involves aspartate 105.

It belongs to the phospholipase A2 family. Group II subfamily. D49 sub-subfamily. The cofactor is Ca(2+). As to expression, expressed by the venom gland.

Its subcellular location is the secreted. The enzyme catalyses a 1,2-diacyl-sn-glycero-3-phosphocholine + H2O = a 1-acyl-sn-glycero-3-phosphocholine + a fatty acid + H(+). Its function is as follows. PLA2 catalyzes the calcium-dependent hydrolysis of the 2-acyl groups in 3-sn-phosphoglycerides. This is Acidic phospholipase A2 PL1 from Vipera renardi (Steppe viper).